Consider the following 496-residue polypeptide: Glycerol kinase (496 aa).

ADP is bound at residue Thr12. Residues Thr12, Thr13, and Ser14 each coordinate ATP. Residue Thr12 coordinates sn-glycerol 3-phosphate. Arg16 provides a ligand contact to ADP. Positions 82, 83, and 134 each coordinate sn-glycerol 3-phosphate. Glycerol contacts are provided by Arg82, Glu83, and Tyr134. His230 is modified (phosphohistidine; by HPr). A sn-glycerol 3-phosphate-binding site is contributed by Asp244. Residues Asp244 and Gln245 each contribute to the glycerol site. Positions 266 and 309 each coordinate ADP. Residues Thr266, Gly309, Gln313, and Gly410 each contribute to the ATP site. Positions 410 and 414 each coordinate ADP.

This sequence belongs to the FGGY kinase family. Post-translationally, the phosphoenolpyruvate-dependent sugar phosphotransferase system (PTS), including enzyme I, and histidine-containing protein (HPr) are required for the phosphorylation of, which leads to the activation of the enzyme.

It catalyses the reaction glycerol + ATP = sn-glycerol 3-phosphate + ADP + H(+). The protein operates within polyol metabolism; glycerol degradation via glycerol kinase pathway; sn-glycerol 3-phosphate from glycerol: step 1/1. Inhibited by fructose 1,6-bisphosphate and p-chloromercuribenzoate (PCMB). In terms of biological role, key enzyme in the regulation of glycerol uptake and metabolism. Catalyzes the phosphorylation of glycerol to yield sn-glycerol 3-phosphate. The chain is Glycerol kinase from Thermus thermophilus.